The chain runs to 202 residues: ATP-dependent Clp protease proteolytic subunit (202 aa).

Ser106 (nucleophile) is an active-site residue. Residue His131 is part of the active site.

This sequence belongs to the peptidase S14 family. In terms of assembly, fourteen ClpP subunits assemble into 2 heptameric rings which stack back to back to give a disk-like structure with a central cavity, resembling the structure of eukaryotic proteasomes.

The protein resides in the cytoplasm. The catalysed reaction is Hydrolysis of proteins to small peptides in the presence of ATP and magnesium. alpha-casein is the usual test substrate. In the absence of ATP, only oligopeptides shorter than five residues are hydrolyzed (such as succinyl-Leu-Tyr-|-NHMec, and Leu-Tyr-Leu-|-Tyr-Trp, in which cleavage of the -Tyr-|-Leu- and -Tyr-|-Trp bonds also occurs).. Cleaves peptides in various proteins in a process that requires ATP hydrolysis. Has a chymotrypsin-like activity. Plays a major role in the degradation of misfolded proteins. This Shewanella baltica (strain OS223) protein is ATP-dependent Clp protease proteolytic subunit.